Reading from the N-terminus, the 128-residue chain is MSVTKEQVIEFISNMTVLELSQFIKELEEKFGVSAAAPAVGMMMAAPTAASAEAEAEEKTEFDVILKEAGANKIAVIKVVRALTGLGLKEAKDKVDGAPSTLKEGVSKEDAEEAKKQLTEAGATVEVK.

The tract at residues 97–128 is disordered; sequence GAPSTLKEGVSKEDAEEAKKQLTEAGATVEVK. A compositionally biased stretch (basic and acidic residues) spans 105-118; sequence GVSKEDAEEAKKQL.

The protein belongs to the bacterial ribosomal protein bL12 family. In terms of assembly, homodimer. Part of the ribosomal stalk of the 50S ribosomal subunit. Forms a multimeric L10(L12)X complex, where L10 forms an elongated spine to which 2 to 4 L12 dimers bind in a sequential fashion. Binds GTP-bound translation factors.

Its function is as follows. Forms part of the ribosomal stalk which helps the ribosome interact with GTP-bound translation factors. Is thus essential for accurate translation. This Lawsonia intracellularis (strain PHE/MN1-00) protein is Large ribosomal subunit protein bL12.